Consider the following 264-residue polypeptide: Thymidylate synthase (264 aa).

Arg-21 is a dUMP binding site. Position 51 (His-51) interacts with (6R)-5,10-methylene-5,6,7,8-tetrahydrofolate. 126-127 is a binding site for dUMP; that stretch reads RR. Cys-146 (nucleophile) is an active-site residue. DUMP-binding positions include 166–169, Asn-177, and 207–209; these read RSAD and HIY. Asp-169 lines the (6R)-5,10-methylene-5,6,7,8-tetrahydrofolate pocket. Residue Ala-263 coordinates (6R)-5,10-methylene-5,6,7,8-tetrahydrofolate.

Belongs to the thymidylate synthase family. Bacterial-type ThyA subfamily. Homodimer.

The protein localises to the cytoplasm. The enzyme catalyses dUMP + (6R)-5,10-methylene-5,6,7,8-tetrahydrofolate = 7,8-dihydrofolate + dTMP. Its pathway is pyrimidine metabolism; dTTP biosynthesis. Catalyzes the reductive methylation of 2'-deoxyuridine-5'-monophosphate (dUMP) to 2'-deoxythymidine-5'-monophosphate (dTMP) while utilizing 5,10-methylenetetrahydrofolate (mTHF) as the methyl donor and reductant in the reaction, yielding dihydrofolate (DHF) as a by-product. This enzymatic reaction provides an intracellular de novo source of dTMP, an essential precursor for DNA biosynthesis. The sequence is that of Thymidylate synthase from Ruthia magnifica subsp. Calyptogena magnifica.